Reading from the N-terminus, the 501-residue chain is Solute carrier family 2, facilitated glucose transporter member 5 (501 aa).

Residue M1 is modified to N-acetylmethionine. Over 1-18 (MEQQDQSMKEGRLTLVLA) the chain is Cytoplasmic. The chain crosses the membrane as a helical span at residues 19 to 39 (LATLIAAFGSSFQYGYNVAAV). Y32 contacts D-fructose. Topologically, residues 40-68 (NSPALLMQQFYNETYYGRTGEFMEDFPLT) are extracellular. An N-linked (GlcNAc...) asparagine glycan is attached at N51. A helical transmembrane segment spans residues 69-91 (LLWSVTVSMFPFGGFIGSLLVGP). Residues 92–98 (LVNKFGR) are Cytoplasmic-facing. Residues 99 to 119 (KGALLFNNIFSIVPAILMGCS) traverse the membrane as a helical segment. The Extracellular segment spans residues 120–126 (RVAKSFE). A helical transmembrane segment spans residues 127–149 (LIIISRLLVGICAGVSSNVVPMY). The Cytoplasmic portion of the chain corresponds to 150-161 (LGELAPKNLRGA). A helical transmembrane segment spans residues 162 to 182 (LGVVPQLFITVGILVAQIFGL). Q167 is a D-fructose binding site. The Extracellular portion of the chain corresponds to 183 to 192 (RNLLANVDGW). The chain crosses the membrane as a helical span at residues 193–213 (PILLGLTGVPAALQLVLLPFF). The Cytoplasmic segment spans residues 214–277 (PESPRYLLIQ…LFRMRSLRWQ (64 aa)). A helical membrane pass occupies residues 278–298 (LLSIIVLMGGQQLSGVNAIYY). D-fructose is bound by residues Q288 and 296-298 (IYY). At 299–313 (YADQIYLSAGVPKEH) the chain is on the extracellular side. The chain crosses the membrane as a helical span at residues 314-334 (VQFVTAGTGAVNVVMTFCAVF). The Cytoplasmic portion of the chain corresponds to 335–342 (VVELLGRR). The chain crosses the membrane as a helical span at residues 343–363 (LLLLLGFSICLVACCVLTAAL). The Extracellular portion of the chain corresponds to 364–371 (ALQDTVSW). A helical membrane pass occupies residues 372 to 394 (MPYISIVCVISYVIGHALGPSPI). H387 is a D-fructose binding site. The Cytoplasmic portion of the chain corresponds to 395–412 (PALLITEIFLQSSRPSAF). A helical transmembrane segment spans residues 413 to 433 (MVGGSVHWLSNFTVGLIFPFI). Residue 419–420 (HW) coordinates D-fructose. The Extracellular portion of the chain corresponds to 434–439 (QEGLGP). A helical membrane pass occupies residues 440–460 (YSFIVFAVICLLTTIYIFLIV). Over 461-501 (PETKAKTFIEINQIFTKMNKVSEVYPEKEELKELPPVTLEQ) the chain is Cytoplasmic.

The protein belongs to the major facilitator superfamily. Sugar transporter (TC 2.A.1.1) family. Glucose transporter subfamily.

It is found in the apical cell membrane. The protein resides in the cell membrane. Its subcellular location is the sarcolemma. The enzyme catalyses D-fructose(out) = D-fructose(in). Its function is as follows. Functions as a fructose transporter that has only low activity with other monosaccharides. Can mediate the uptake of deoxyglucose, but with low efficiency. Essential for fructose uptake in the small intestine. Plays a role in the regulation of salt uptake and blood pressure in response to dietary fructose. Required for the development of high blood pressure in response to high dietary fructose intake. This chain is Solute carrier family 2, facilitated glucose transporter member 5, found in Pongo abelii (Sumatran orangutan).